Here is a 562-residue protein sequence, read N- to C-terminus: Dihydroxy-acid dehydratase 2 (562 aa).

Residue Cys50 participates in [2Fe-2S] cluster binding. Asp82 contacts Mg(2+). Cys123 provides a ligand contact to [2Fe-2S] cluster. Mg(2+) is bound by residues Asp124, Lys125, and Glu447. Residue Lys125 is modified to N6-carboxylysine. The Proton acceptor role is filled by Ser473.

Belongs to the IlvD/Edd family. As to quaternary structure, homodimer. [2Fe-2S] cluster serves as cofactor. It depends on Mg(2+) as a cofactor.

The catalysed reaction is (2R)-2,3-dihydroxy-3-methylbutanoate = 3-methyl-2-oxobutanoate + H2O. It catalyses the reaction (2R,3R)-2,3-dihydroxy-3-methylpentanoate = (S)-3-methyl-2-oxopentanoate + H2O. The protein operates within amino-acid biosynthesis; L-isoleucine biosynthesis; L-isoleucine from 2-oxobutanoate: step 3/4. It participates in amino-acid biosynthesis; L-valine biosynthesis; L-valine from pyruvate: step 3/4. Functionally, functions in the biosynthesis of branched-chain amino acids. Catalyzes the dehydration of (2R,3R)-2,3-dihydroxy-3-methylpentanoate (2,3-dihydroxy-3-methylvalerate) into 2-oxo-3-methylpentanoate (2-oxo-3-methylvalerate) and of (2R)-2,3-dihydroxy-3-methylbutanoate (2,3-dihydroxyisovalerate) into 2-oxo-3-methylbutanoate (2-oxoisovalerate), the penultimate precursor to L-isoleucine and L-valine, respectively. The chain is Dihydroxy-acid dehydratase 2 from Bordetella pertussis (strain Tohama I / ATCC BAA-589 / NCTC 13251).